A 394-amino-acid polypeptide reads, in one-letter code: 3-amino-4-hydroxybenzoate 2-monooxygenase (394 aa).

Residues A16 and R109 each contribute to the FAD site. The Proton acceptor role is filled by Y214. D287 provides a ligand contact to FAD.

Belongs to the 6-hydroxynicotinate 3-monooxygenase family. FAD serves as cofactor.

The catalysed reaction is 3-amino-4-hydroxybenzoate + NADPH + O2 + H(+) = 3-amino-2,4-dihydroxybenzoate + NADP(+) + H2O. The protein operates within antibiotic biosynthesis. Functionally, part of a gene cluster involved in the biosynthesis of cremeomycin, a light-sensitive o-diazoquinone with antibacterial and antiproliferative effects. Catalyzes the hydroxylation of 3-amino-4-hydroxybenzoate (3,4-AHBA) to 3-amino-2,4-dihydroxybenzoate (3,2,4-ADHBA). This chain is 3-amino-4-hydroxybenzoate 2-monooxygenase, found in Streptomyces cremeus.